A 37-amino-acid chain; its full sequence is Large ribosomal subunit protein bL36 (37 aa).

Belongs to the bacterial ribosomal protein bL36 family.

The protein is Large ribosomal subunit protein bL36 of Treponema pallidum (strain Nichols).